The following is a 134-amino-acid chain: Insulin-like peptide 4 (134 aa).

The first 26 residues, 1-26 (MSLIRLGLALLLLLATVSQLLQPVQG), serve as a signal peptide directing secretion. Cystine bridges form between Cys-31–Cys-120, Cys-43–Cys-133, and Cys-119–Cys-124. Residues 54–108 (SSASKDARVRDLIRKLQQPDEDIEQETETGRLKQKHTDADTEKGVPPAVGSGRKL) constitute a propeptide, connecting peptide. Residues 72–107 (PDEDIEQETETGRLKQKHTDADTEKGVPPAVGSGRK) are disordered. A compositionally biased stretch (basic and acidic residues) spans 81–96 (ETGRLKQKHTDADTEK).

Belongs to the insulin family. In terms of assembly, heterodimer of a B chain and an A chain linked by two disulfide bonds. Expressed at a high level in the embryonic mesoderm, with expression continuing after gastrulation and reducing from stage 12 onwards. Highly expressed in the embryonic anterior midgut rudiment and larval midgut.

The protein localises to the secreted. Its function is as follows. Possible ligand of InR/insulin-like receptor. This is Insulin-like peptide 4 from Drosophila melanogaster (Fruit fly).